Consider the following 585-residue polypeptide: Serine protease HtrA-like (585 aa).

The tract at residues 1 to 184 (MDNNKKQVIP…QPKDKDNDNT (184 aa)) is disordered. Residues 21–82 (YFHNVEREER…IHQQRDDKSY (62 aa)) show a composition bias toward basic and acidic residues. A compositionally biased stretch (polar residues) spans 84 to 94 (QKTLNQNNQMN). Residues 95–113 (KSKDDDNKIGEESLHDVRV) are compositionally biased toward basic and acidic residues. Residues 114–124 (SSDTSTLPHQN) show a composition bias toward polar residues. Residues 126–139 (SIKDYDDSGNESKQ) are compositionally biased toward basic and acidic residues. A compositionally biased stretch (polar residues) spans 151–175 (GVNSNHTEQDSRSTQPYSSKHSYSQ). The chain crosses the membrane as a helical span at residues 224–244 (MLIIIGIIVLLLILNAIFTTV). Catalysis depends on charge relay system residues His320, Asp350, and Ser435. The 60-residue stretch at 516 to 575 (GVLIGEVKENGLGDKAGLKKGDVIVELDGKKIEDNLRYRQVIYSHYDDQKTITAKIYRNG) folds into the PDZ domain.

This sequence belongs to the peptidase S1C family.

It localises to the cell membrane. The sequence is that of Serine protease HtrA-like from Staphylococcus epidermidis (strain ATCC 35984 / DSM 28319 / BCRC 17069 / CCUG 31568 / BM 3577 / RP62A).